Consider the following 499-residue polypeptide: Putative ribose/galactose/methyl galactoside import ATP-binding protein 3 (499 aa).

ABC transporter domains follow at residues 8–243 and 253–497; these read LRMR…VGRE and SKIG…TGEE. 40–47 is a binding site for ATP; it reads GENGAGKS.

The protein belongs to the ABC transporter superfamily. Carbohydrate importer 2 (CUT2) (TC 3.A.1.2) family.

The protein localises to the cell inner membrane. The enzyme catalyses D-ribose(out) + ATP + H2O = D-ribose(in) + ADP + phosphate + H(+). It catalyses the reaction D-galactose(out) + ATP + H2O = D-galactose(in) + ADP + phosphate + H(+). In terms of biological role, part of an ABC transporter complex involved in carbohydrate import. Could be involved in ribose, galactose and/or methyl galactoside import. Responsible for energy coupling to the transport system. This Agrobacterium fabrum (strain C58 / ATCC 33970) (Agrobacterium tumefaciens (strain C58)) protein is Putative ribose/galactose/methyl galactoside import ATP-binding protein 3.